A 109-amino-acid chain; its full sequence is Ribonuclease P protein component 4 (109 aa).

Zn(2+) contacts are provided by cysteine 65, cysteine 68, cysteine 94, and cysteine 97.

This sequence belongs to the eukaryotic/archaeal RNase P protein component 4 family. In terms of assembly, consists of a catalytic RNA component and at least 4-5 protein subunits. Zn(2+) is required as a cofactor.

The protein resides in the cytoplasm. The enzyme catalyses Endonucleolytic cleavage of RNA, removing 5'-extranucleotides from tRNA precursor.. Part of ribonuclease P, a protein complex that generates mature tRNA molecules by cleaving their 5'-ends. This chain is Ribonuclease P protein component 4, found in Methanococcus vannielii (strain ATCC 35089 / DSM 1224 / JCM 13029 / OCM 148 / SB).